The sequence spans 283 residues: Cyclin-C (283 aa).

Residues 46 to 144 enclose the Cyclin N-terminal domain; sequence NVIQALGEHL…ILECEFYLLE (99 aa). Residues 252–283 form a disordered region; sequence SILSKMPKPKPPPNSDGEQGTNGSQSSGYSQS. Residues 267–283 are compositionally biased toward polar residues; sequence DGEQGTNGSQSSGYSQS.

Belongs to the cyclin family. Cyclin C subfamily. Component of the Mediator complex. The cylin/CDK pair formed by ccnc/cdk8 also associates with the large subunit of RNA polymerase II.

The protein resides in the nucleus. Its function is as follows. Component of the Mediator complex, a coactivator involved in regulated gene transcription of nearly all RNA polymerase II-dependent genes. Mediator functions as a bridge to convey information from gene-specific regulatory proteins to the basal RNA polymerase II transcription machinery. Mediator is recruited to promoters by direct interactions with regulatory proteins and serves as a scaffold for the assembly of a functional preinitiation complex with RNA polymerase II and the general transcription factors. Binds to and activates cyclin-dependent kinase cdk8 that phosphorylates the CTD (C-terminal domain) of the large subunit of RNA polymerase II (RNAp II), which may inhibit the formation of a transcription initiation complex. This Xenopus laevis (African clawed frog) protein is Cyclin-C (ccnc).